Reading from the N-terminus, the 253-residue chain is MRILLSNDDGYLAPGLAALSDALQPLADVTVIAPEQNCSGASNSLTLSRPLSVQRAANTGFFYVNGTPTDSVHVALTGMADARPDLVVSGINNGQNMGEDTLYSGTVAAATEGIMFGVPAIAFSLADKGWAHLADAARVAAEIVAHYLAHPLPGQPLLNVNIPNLPYDALKGWQVTRLGKRHPSQPVIRQTDPRGEPVYWIGAAGAALDASEGTDFHAIANGFVSITPLQLDLTHTQMLPATRDWARAAGRAS.

Positions 8, 9, 39, and 92 each coordinate a divalent metal cation.

The protein belongs to the SurE nucleotidase family. A divalent metal cation is required as a cofactor.

The protein resides in the cytoplasm. The catalysed reaction is a ribonucleoside 5'-phosphate + H2O = a ribonucleoside + phosphate. In terms of biological role, nucleotidase that shows phosphatase activity on nucleoside 5'-monophosphates. In Burkholderia vietnamiensis (strain G4 / LMG 22486) (Burkholderia cepacia (strain R1808)), this protein is 5'-nucleotidase SurE.